Consider the following 338-residue polypeptide: Calcium uniporter protein 4, mitochondrial (338 aa).

A mitochondrion-targeting transit peptide spans 1-36 (MVMMKKLLSNRLFNMSKTASQSLMNCRTSSSSSLAM). A helical transmembrane segment spans residues 233–253 (LWAGLGYLIIQTAGFMRLTFW). Residues 257 to 265 (WDVMEPICF) carry the Selectivity filter motif. Glu261 is a Ca(2+) binding site. Residues 263-280 (ICFYVSSVYFMAGYTFFL) form a helical membrane-spanning segment.

It belongs to the MCU (TC 1.A.77) family.

The protein resides in the mitochondrion inner membrane. It catalyses the reaction Ca(2+)(in) = Ca(2+)(out). Mitochondrial inner membrane calcium uniporter that mediates calcium uptake into mitochondria. Constitutes a pore-forming and calcium-conducting subunit. Mitochondrial calcium homeostasis plays key roles in cellular physiology and regulates cell bioenergetics, cytoplasmic calcium signals and activation of cell death pathways. In Arabidopsis thaliana (Mouse-ear cress), this protein is Calcium uniporter protein 4, mitochondrial.